The sequence spans 630 residues: Conserved oligomeric Golgi complex subunit 6 (630 aa).

This sequence belongs to the COG6 family. In terms of assembly, component of the conserved oligomeric Golgi complex which is composed of eight different subunits and is required for normal Golgi morphology and localization.

The protein localises to the golgi apparatus membrane. Its function is as follows. Required for normal Golgi function. This chain is Conserved oligomeric Golgi complex subunit 6, found in Drosophila melanogaster (Fruit fly).